Reading from the N-terminus, the 1124-residue chain is uncharacterized protein (1124 aa).

The N-terminal stretch at Met-1–Ala-28 is a signal peptide. A run of 7 helical transmembrane segments spans residues Ile-332 to Gly-352, Glu-359 to Ile-379, Met-393 to Met-413, Met-495 to Val-515, Met-522 to Ala-542, Met-555 to Val-575, and Ile-700 to Phe-720.

Belongs to the TrbL/VirB6 family.

It is found in the cell membrane. This is an uncharacterized protein from Rickettsia prowazekii (strain Madrid E).